Reading from the N-terminus, the 231-residue chain is Potassium/proton antiporter CemA (231 aa).

The next 4 membrane-spanning stretches (helical) occupy residues 7–27 (FIPL…SFTF), 104–124 (IHTI…SVYS), 154–174 (ILFL…ELMI), and 189–209 (IISF…KYWI).

It belongs to the CemA family.

The protein resides in the plastid. It localises to the chloroplast inner membrane. The catalysed reaction is K(+)(in) + H(+)(out) = K(+)(out) + H(+)(in). Contributes to K(+)/H(+) antiport activity by supporting proton efflux to control proton extrusion and homeostasis in chloroplasts in a light-dependent manner to modulate photosynthesis. Prevents excessive induction of non-photochemical quenching (NPQ) under continuous-light conditions. Indirectly promotes efficient inorganic carbon uptake into chloroplasts. The sequence is that of Potassium/proton antiporter CemA from Pisum sativum (Garden pea).